Consider the following 142-residue polypeptide: Putative pre-16S rRNA nuclease (142 aa).

It belongs to the YqgF nuclease family.

It is found in the cytoplasm. Could be a nuclease involved in processing of the 5'-end of pre-16S rRNA. The protein is Putative pre-16S rRNA nuclease of Malacoplasma penetrans (strain HF-2) (Mycoplasma penetrans).